Reading from the N-terminus, the 272-residue chain is Outer surface protein A (272 aa).

The signal sequence occupies residues 1 to 16; sequence MKKYLLGIGLILALIA. Residue C17 is the site of N-palmitoyl cysteine attachment. Residue C17 is the site of S-diacylglycerol cysteine attachment.

This sequence belongs to the OspA lipoprotein family.

The protein localises to the cell outer membrane. It is found in the cell surface. This chain is Outer surface protein A, found in Borreliella burgdorferi (Lyme disease spirochete).